A 293-amino-acid polypeptide reads, in one-letter code: tRNA pseudouridine synthase B (293 aa).

Asp39 (nucleophile) is an active-site residue.

The protein belongs to the pseudouridine synthase TruB family. Type 1 subfamily.

It carries out the reaction uridine(55) in tRNA = pseudouridine(55) in tRNA. Responsible for synthesis of pseudouridine from uracil-55 in the psi GC loop of transfer RNAs. The chain is tRNA pseudouridine synthase B from Thermobifida fusca (strain YX).